Consider the following 501-residue polypeptide: Bifunctional purine biosynthesis protein PurH (501 aa).

In terms of domain architecture, MGS-like spans 1 to 144 (MKKRALISVF…KNFQDVVVIS (144 aa)).

This sequence belongs to the PurH family.

The catalysed reaction is (6R)-10-formyltetrahydrofolate + 5-amino-1-(5-phospho-beta-D-ribosyl)imidazole-4-carboxamide = 5-formamido-1-(5-phospho-D-ribosyl)imidazole-4-carboxamide + (6S)-5,6,7,8-tetrahydrofolate. It carries out the reaction IMP + H2O = 5-formamido-1-(5-phospho-D-ribosyl)imidazole-4-carboxamide. Its pathway is purine metabolism; IMP biosynthesis via de novo pathway; 5-formamido-1-(5-phospho-D-ribosyl)imidazole-4-carboxamide from 5-amino-1-(5-phospho-D-ribosyl)imidazole-4-carboxamide (10-formyl THF route): step 1/1. It functions in the pathway purine metabolism; IMP biosynthesis via de novo pathway; IMP from 5-formamido-1-(5-phospho-D-ribosyl)imidazole-4-carboxamide: step 1/1. This Clostridium botulinum (strain Eklund 17B / Type B) protein is Bifunctional purine biosynthesis protein PurH.